The sequence spans 552 residues: MAEKQKHDGRVKIGHYVLGDTLGVGTFGKVKIGEHQLTGHKVAVKILNRQKIRSLDVVGKIKREIQNLKLFRHPHIIKLYQVISTPTDFFMVMEYVSGGELFDYICKHGRVEEVEARRLFQQILSAVDYCHRHMVVHRDLKPENVLLDAQMNAKIADFGLSNMMSDGEFLRTSCGSPNYAAPEVISGRLYAGPEVDIWSCGVILYALLCGTLPFDDEHVPTLFKKIRGGVFYIPEYLNRSIATLLMHMLQVDPLKRATIKDIREHEWFKQDLPSYLFPEDPSYDANVIDDEAVKEVCEKFECTESEVMNSLYSGDPQDQLAVAYHLIIDNRRIMNQASEFYLASSPPTGSFMDDMAMHIPPGLKPHPERMPPLIADSPKARCPLDALNTTKPKSLAVKKAKWHLGIRSQSKPYDIMAEVYRAMKQLDFEWKVVNAYHLRVRRKNPVTGNYVKMSLQLYLVDNRSYLLDFKSIDDEVVEQRSGSSTPQRSCSAAGLHRPRSSVDSSTAENHSLSGSLTGSLTGSTLSSASPRLGSHTMDFFEMCASLITALAR.

A Protein kinase domain is found at Tyr16 to Phe268. ATP contacts are provided by residues Leu22–Val30 and Lys45. The active-site Proton acceptor is Asp139. The residue at position 172 (Thr172) is a Phosphothreonine; by LKB1 and CaMKK2. Thr258 is modified (phosphothreonine). An AIS region spans residues Glu291 to Asp376. Ser377 bears the Phosphoserine mark. Residues Glu478–Leu520 form a disordered region. Positions Arg480–Cys490 are enriched in polar residues. Ser491 carries the post-translational modification Phosphoserine. Positions Ser501 to His510 are enriched in polar residues. The span at Ser511–Leu520 shows a compositional bias: low complexity.

The protein belongs to the protein kinase superfamily. CAMK Ser/Thr protein kinase family. SNF1 subfamily. AMPK is a heterotrimer of an alpha catalytic subunit (PRKAA1 or PRKAA2), a beta (PRKAB1 or PRKAB2) and a gamma non-catalytic subunits (PRKAG1, PRKAG2 or PRKAG3). Interacts with FNIP1 and FNIP2. Associates with internalized INSR complexes on Golgi/endosomal membranes; PRKAA2/AMPK2 together with ATIC and HACD3/PTPLAD1 is proposed to be part of a signaling network regulating INSR autophosphorylation and endocytosis. Interacts with DUSP29. Interacts with ARF6. The phosphorylated form at Thr-172 mediated by CamKK2 interacts with ACSS2. Requires Mg(2+) as cofactor. In terms of processing, ubiquitinated. Phosphorylated at Thr-172 by STK11/LKB1 in complex with STE20-related adapter-alpha (STRADA) pseudo kinase and CAB39. Also phosphorylated at Thr-172 by CAMKK2; triggered by a rise in intracellular calcium ions, without detectable changes in the AMP/ATP ratio. CAMKK1 can also phosphorylate Thr-172, but at much lower level. Dephosphorylated by protein phosphatase 2A and 2C (PP2A and PP2C). Phosphorylated by ULK1; leading to negatively regulate AMPK activity and suggesting the existence of a regulatory feedback loop between ULK1 and AMPK. Dephosphorylated by PPM1A and PPM1B at Thr-172 (mediated by STK11/LKB1). Skeletal muscle, lower levels in liver, heart and kidney.

It is found in the cytoplasm. The protein resides in the nucleus. It carries out the reaction L-seryl-[protein] + ATP = O-phospho-L-seryl-[protein] + ADP + H(+). It catalyses the reaction L-threonyl-[protein] + ATP = O-phospho-L-threonyl-[protein] + ADP + H(+). The catalysed reaction is L-seryl-[acetyl-CoA carboxylase] + ATP = O-phospho-L-seryl-[acetyl-CoA carboxylase] + ADP + H(+). The enzyme catalyses L-seryl-[3-hydroxy-3-methylglutaryl-coenzyme A reductase] + ATP = O-phospho-L-seryl-[3-hydroxy-3-methylglutaryl-coenzyme A reductase] + ADP + H(+). With respect to regulation, activated by phosphorylation on Thr-172. Binding of AMP to non-catalytic gamma subunit (PRKAG1, PRKAG2 or PRKAG3) results in allosteric activation, inducing phosphorylation on Thr-172. AMP-binding to gamma subunit also sustains activity by preventing dephosphorylation of Thr-172. ADP also stimulates Thr-172 phosphorylation, without stimulating already phosphorylated AMPK. ATP promotes dephosphorylation of Thr-172, rendering the enzyme inactive. Under physiological conditions AMPK mainly exists in its inactive form in complex with ATP, which is much more abundant than AMP. Selectively inhibited by compound C (6-[4-(2-Piperidin-1-yl-ethoxy)-phenyl)]-3-pyridin-4-yl-pyyrazolo[1,5-a] pyrimidine. Activated by resveratrol, a natural polyphenol present in red wine, and S17834, a synthetic polyphenol. Salicylate/aspirin directly activates kinase activity, primarily by inhibiting Thr-172 dephosphorylation. In terms of biological role, catalytic subunit of AMP-activated protein kinase (AMPK), an energy sensor protein kinase that plays a key role in regulating cellular energy metabolism. In response to reduction of intracellular ATP levels, AMPK activates energy-producing pathways and inhibits energy-consuming processes: inhibits protein, carbohydrate and lipid biosynthesis, as well as cell growth and proliferation. AMPK acts via direct phosphorylation of metabolic enzymes, and by longer-term effects via phosphorylation of transcription regulators. Regulates lipid synthesis by phosphorylating and inactivating lipid metabolic enzymes such as ACACA, ACACB, GYS1, HMGCR and LIPE; regulates fatty acid and cholesterol synthesis by phosphorylating acetyl-CoA carboxylase (ACACA and ACACB) and hormone-sensitive lipase (LIPE) enzymes, respectively. Promotes lipolysis of lipid droplets by mediating phosphorylation of isoform 1 of CHKA (CHKalpha2). Regulates insulin-signaling and glycolysis by phosphorylating IRS1, PFKFB2 and PFKFB3. Involved in insulin receptor/INSR internalization. AMPK stimulates glucose uptake in muscle by increasing the translocation of the glucose transporter SLC2A4/GLUT4 to the plasma membrane, possibly by mediating phosphorylation of TBC1D4/AS160. Regulates transcription and chromatin structure by phosphorylating transcription regulators involved in energy metabolism such as CRTC2/TORC2, FOXO3, histone H2B, HDAC5, MEF2C, MLXIPL/ChREBP, EP300, HNF4A, p53/TP53, SREBF1, SREBF2 and PPARGC1A. Acts as a key regulator of glucose homeostasis in liver by phosphorylating CRTC2/TORC2, leading to CRTC2/TORC2 sequestration in the cytoplasm. In response to stress, phosphorylates 'Ser-36' of histone H2B (H2BS36ph), leading to promote transcription. Acts as a key regulator of cell growth and proliferation by phosphorylating FNIP1, TSC2, RPTOR, WDR24 and ATG1/ULK1: in response to nutrient limitation, negatively regulates the mTORC1 complex by phosphorylating RPTOR component of the mTORC1 complex and by phosphorylating and activating TSC2. Also phosphorylates and inhibits GATOR2 subunit WDR24 in response to nutrient limitation, leading to suppress glucose-mediated mTORC1 activation. In response to energetic stress, phosphorylates FNIP1, inactivating the non-canonical mTORC1 signaling, thereby promoting nuclear translocation of TFEB and TFE3, and inducing transcription of lysosomal or autophagy genes. In response to nutrient limitation, promotes autophagy by phosphorylating and activating ATG1/ULK1. In that process, it also activates WDR45/WIPI4. Phosphorylates CASP6, thereby preventing its autoprocessing and subsequent activation. AMPK also acts as a regulator of circadian rhythm by mediating phosphorylation of CRY1, leading to destabilize it. May regulate the Wnt signaling pathway by phosphorylating CTNNB1, leading to stabilize it. Also acts as a regulator of cellular polarity by remodeling the actin cytoskeleton; probably by indirectly activating myosin. Also phosphorylates CFTR, EEF2K, KLC1, NOS3 and SLC12A1. Plays an important role in the differential regulation of pro-autophagy (composed of PIK3C3, BECN1, PIK3R4 and UVRAG or ATG14) and non-autophagy (composed of PIK3C3, BECN1 and PIK3R4) complexes, in response to glucose starvation. Can inhibit the non-autophagy complex by phosphorylating PIK3C3 and can activate the pro-autophagy complex by phosphorylating BECN1. Upon glucose starvation, promotes ARF6 activation in a kinase-independent manner leading to cell migration. Upon glucose deprivation mediates the phosphorylation of ACSS2 at 'Ser-659', which exposes the nuclear localization signal of ACSS2, required for its interaction with KPNA1 and nuclear translocation. Upon stress, regulates mitochondrial fragmentation through phosphorylation of MTFR1L. In Rattus norvegicus (Rat), this protein is 5'-AMP-activated protein kinase catalytic subunit alpha-2 (Prkaa2).